We begin with the raw amino-acid sequence, 203 residues long: MVVLFLIWSHVNVVVSDSMYPIMKRGDLVIVENAGFEFNPNDVDVGDIVVYKAHWPYYQYLLSEIDYKLNLNPYTTLYIFKEGDFKDMSVKVLGEIKTDKSSYKILEADIPKSPTKPVIHRVIDKVEFNNKTYFIIKGDNNPIHDPELVSINQIKQRVIVVDGHPLVIPYVGYLSIWLKEYWYLVVLFVLIYYAYNYLKGGRK.

A helical membrane pass occupies residues 171-191; the sequence is VGYLSIWLKEYWYLVVLFVLI.

Its subcellular location is the membrane. This is an uncharacterized protein from Methanocaldococcus jannaschii (strain ATCC 43067 / DSM 2661 / JAL-1 / JCM 10045 / NBRC 100440) (Methanococcus jannaschii).